Consider the following 1401-residue polypeptide: MMKKKISAKKKNQQQQQLHQPTMSEVTEEERTRYEEEEDVRDSPSDSSEESEDDEEEIQKVREGFIVDDEEDEVQTKKRKSHKRKRDKERPHYDDALDDDDLELLLENSGLKRGSSSSGKFKRLKRKQIEDDEDEIESQDHQGEQQLRDIFSDDEEVEEEAAPRIMDEFDGFIEEDDFSDEDEQTRLERREQRKKKKQGPRIDTSNLSNVDRQSLSELFEVFGDGNEYDWALEAQELEDAGAIDKEEPASLDEVFEHSELKERMLTEEDNLIRIIDVPERYQMYRSALTYIDLDDEELELEKTWVANTLLKEKKAFLRDDWVEPFKQCVGQVVQFVSKENLEVPFIWNHRRDYLEYVDPDAPIPGSVRELMISEDDVWRIVKLDIEYHSLYEKRLNTEKIIDSLEIDDELVKDIKTLDSMVAIQDMHDYIQFTYSKEIRQREETQNRKHSKFALYERIRENVLYDAVKAYGITAKEFGENVQDQSSKGFEVPYRIHATDDPWESPDDMIERLIQDDEVIFRDEKTARDAVRRTFADEIFYNPKIRHEVRSTYKLYASISVAVTEKGRASIDAHSPFADIKYAINRSPADLIAKPDVLLRMLEAERLGLVVIKVETKDFANWFDCLFNCLKSDGFSDISEKWNQERQAVLRTAISRLCAVVALNTKEDLRRECERLIASKVRHGLLAKIEQAPFTPYGFDIGSKANVLALTFGKGDYDSAVVGVYIKHDGKVSRFFKSTENPSRNRETEDAFKGQLKQFFDEDETPDVVVVSGYNANTKRLHDVVYNFVSEYGISVKSEFDDGSSQLVKVIWGQDETARLYQNSERAKKEFPDKPTLVKYAISLGRYLQDPLLEYITLGDDILSLTFHEHQKLISNDLVKEVVESAFVDLVNAVGVDINESVRDSRLAQTLKYVGGLGPRKASGMLRNIAQKLGSVLTTRSQLIEYELTTRTIFINCSAALKISLNKSINVKDFEIEILDTTRIHPEDYQLAMKMAADALDMDEESELHEKGGVIKELLENDPSKLNLLNLNDFANQIYKLTHKLKFRSLQAIRLELIQGFAEIRSPFRILTNEDAFFILTGEKPQMLKNTVIPATITKVTKNHHDPYARIRGLKVVTPSLIQGTIDENAIPRDAEYVQGQVVQAVVLELYTDTFAAVLSLRREDISRAMKGGVVREYGKWDYKAEDEDIKREKAKENAKLAKTRNIQHPFYRNFNYKQAEEYLAPQNVGDYVIRPSSKGASYLTITWKVGNNLFQHLLVEERSRGRFKEYIVDGKTYEDLDQLAFQHIQVIAKNVTDMVRHPKFREGTLSVVHEWLESYTRANPKSSAYVFCYDHKSPGNFLLLFKVNVSAKVVTWHVKTEVGGYELRSSVYPNMLSLCNGFKQAVKMSSQQTKSYNTGYY.

Positions 1-12 are enriched in basic residues; the sequence is MMKKKISAKKKN. Residues 1-209 form a disordered region; that stretch reads MMKKKISAKK…PRIDTSNLSN (209 aa). The segment covering 47-57 has biased composition (acidic residues); the sequence is SSEESEDDEEE. The segment covering 77 to 87 has biased composition (basic residues); the sequence is KKRKSHKRKRD. A compositionally biased stretch (low complexity) spans 105–119; the sequence is LLENSGLKRGSSSSG. Positions 138-151 are enriched in basic and acidic residues; the sequence is SQDHQGEQQLRDIF. A compositionally biased stretch (acidic residues) spans 168 to 183; that stretch reads EFDGFIEEDDFSDEDE. The SH2 domain occupies 1209-1303; that stretch reads PFYRNFNYKQ…NVTDMVRHPK (95 aa).

Belongs to the SPT6 family.

Its subcellular location is the nucleus. It is found in the chromosome. In terms of biological role, histone H3-H4 chaperone that plays a role in maintenance of chromatin structure during RNA polymerase II transcription elongation thereby repressing transcription initiation from cryptic promoters. Mediates the reassembly of nucleosomes onto the promoters of at least a selected set of genes during repression; the nucleosome reassembly is essential for transcriptional repression. Essential for viability. The protein is Transcription elongation factor SPT6 (SPT6) of Candida albicans (strain SC5314 / ATCC MYA-2876) (Yeast).